The primary structure comprises 255 residues: Imidazole glycerol phosphate synthase subunit HisF (255 aa).

Residues aspartate 11 and aspartate 130 contribute to the active site.

It belongs to the HisA/HisF family. As to quaternary structure, heterodimer of HisH and HisF.

Its subcellular location is the cytoplasm. The enzyme catalyses 5-[(5-phospho-1-deoxy-D-ribulos-1-ylimino)methylamino]-1-(5-phospho-beta-D-ribosyl)imidazole-4-carboxamide + L-glutamine = D-erythro-1-(imidazol-4-yl)glycerol 3-phosphate + 5-amino-1-(5-phospho-beta-D-ribosyl)imidazole-4-carboxamide + L-glutamate + H(+). The protein operates within amino-acid biosynthesis; L-histidine biosynthesis; L-histidine from 5-phospho-alpha-D-ribose 1-diphosphate: step 5/9. Functionally, IGPS catalyzes the conversion of PRFAR and glutamine to IGP, AICAR and glutamate. The HisF subunit catalyzes the cyclization activity that produces IGP and AICAR from PRFAR using the ammonia provided by the HisH subunit. The sequence is that of Imidazole glycerol phosphate synthase subunit HisF from Rhodopseudomonas palustris (strain BisA53).